We begin with the raw amino-acid sequence, 197 residues long: Cold-regulated 413 plasma membrane protein 1 (197 aa).

At 1–40 (MPMKSLRNDHGTLKAMIGSDFNELTIAAKNLATHAFTLTG) the chain is on the extracellular side. A helical transmembrane segment spans residues 41–61 (LGFGTSVLEWVASIAAIYLLV). Residues 62–71 (LDRTNWKTNM) are Cytoplasmic-facing. The helical transmembrane segment at 72–92 (LTSLLIPYIFFSLPSLIFGIF) threads the bilayer. Over 93-94 (RG) the chain is Extracellular. A helical membrane pass occupies residues 95–115 (EIGKWIAFVAVVVQLFFPKHA). At 116–117 (RE) the chain is on the cytoplasmic side. Residues 118–138 (YLELPVALVLLAVVAPNLIAG) traverse the membrane as a helical segment. The Extracellular segment spans residues 139–141 (TFR). The helical transmembrane segment at 142–162 (DSWIGLAICLGIGCYLLQEHI) threads the bilayer. The Cytoplasmic portion of the chain corresponds to 163 to 176 (RASGGFRNAFTKAN). A helical transmembrane segment spans residues 177-197 (GISNTVGIICLVVFPVWALIF).

Belongs to the Cold-regulated 413 protein family.

It localises to the membrane. This Arabidopsis thaliana (Mouse-ear cress) protein is Cold-regulated 413 plasma membrane protein 1 (COR413PM1).